A 532-amino-acid chain; its full sequence is CTP synthase (532 aa).

The amidoligase domain stretch occupies residues methionine 1–isoleucine 267. Serine 13 lines the CTP pocket. Serine 13 contributes to the UTP binding site. Position 14–19 (glycine 14–isoleucine 19) interacts with ATP. An L-glutamine-binding site is contributed by tyrosine 54. Aspartate 71 lines the ATP pocket. Residues aspartate 71 and glutamate 141 each contribute to the Mg(2+) site. Residues aspartate 148–glutamate 150, lysine 188–glutamine 193, and lysine 224 each bind CTP. Residues lysine 188–glutamine 193 and lysine 224 contribute to the UTP site. The 241-residue stretch at glutamate 292–lysine 532 folds into the Glutamine amidotransferase type-1 domain. Glycine 354 contributes to the L-glutamine binding site. Cysteine 381 acts as the Nucleophile; for glutamine hydrolysis in catalysis. L-glutamine is bound by residues leucine 382–glutamine 385, glutamate 405, and arginine 462. Catalysis depends on residues histidine 507 and glutamate 509.

It belongs to the CTP synthase family. Homotetramer.

The catalysed reaction is UTP + L-glutamine + ATP + H2O = CTP + L-glutamate + ADP + phosphate + 2 H(+). The enzyme catalyses L-glutamine + H2O = L-glutamate + NH4(+). It carries out the reaction UTP + NH4(+) + ATP = CTP + ADP + phosphate + 2 H(+). Its pathway is pyrimidine metabolism; CTP biosynthesis via de novo pathway; CTP from UDP: step 2/2. With respect to regulation, allosterically activated by GTP, when glutamine is the substrate; GTP has no effect on the reaction when ammonia is the substrate. The allosteric effector GTP functions by stabilizing the protein conformation that binds the tetrahedral intermediate(s) formed during glutamine hydrolysis. Inhibited by the product CTP, via allosteric rather than competitive inhibition. Functionally, catalyzes the ATP-dependent amination of UTP to CTP with either L-glutamine or ammonia as the source of nitrogen. Regulates intracellular CTP levels through interactions with the four ribonucleotide triphosphates. In Mesoplasma florum (strain ATCC 33453 / NBRC 100688 / NCTC 11704 / L1) (Acholeplasma florum), this protein is CTP synthase.